Reading from the N-terminus, the 250-residue chain is Neurotrophic factor BDNF precursor form (250 aa).

The N-terminal stretch at 1–18 is a signal peptide; the sequence is MTILFLTMVISYFGCMKA. Positions 19-131 are excised as a propeptide; that stretch reads APMKEANLRA…AANMSMRVRR (113 aa). 3 disulfides stabilise this stretch: Cys-144–Cys-211, Cys-189–Cys-240, and Cys-199–Cys-242.

It belongs to the NGF-beta family. As to quaternary structure, monomers and homodimers. Binds to NTRK2/TRKB. Can form heterodimers with other neurotrophin family members, such as NTF3 and NTF4 (in vitro), but the physiological relevance of this is not clear. BDNF precursor form: interacts with the heterodimer formed by NGFR and SORCS2. Mature BDNF has much lower affinity for the heterodimer formed by NGFR and SORCS2. N-glycosylated and glycosulfated, contrary to mature BDNF. Post-translationally, mature BDNF is produced by proteolytic removal of the propeptide, catalyzed by a FURIN family member. In addition, the precursor form is proteolytically cleaved within the propeptide, but this is not an obligatory intermediate for the production of mature BDNF. Can be converted into mature BDNF by plasmin (PLG).

The protein localises to the secreted. In terms of biological role, important signaling molecule that activates signaling cascades downstream of NTRK2. During development, promotes the survival and differentiation of selected neuronal populations of the peripheral and central nervous systems. Participates in axonal growth, pathfinding and in the modulation of dendritic growth and morphology. Major regulator of synaptic transmission and plasticity at adult synapses in many regions of the CNS. The versatility of BDNF is emphasized by its contribution to a range of adaptive neuronal responses including long-term potentiation (LTP), long-term depression (LTD), certain forms of short-term synaptic plasticity, as well as homeostatic regulation of intrinsic neuronal excitability. Important signaling molecule that activates signaling cascades downstream of NTRK2. Activates signaling cascades via the heterodimeric receptor formed by NGFR and SORCS2. Signaling via NGFR and SORCS2 plays a role in synaptic plasticity and long-term depression (LTD). Binding to NGFR and SORCS2 promotes neuronal apoptosis. Promotes neuronal growth cone collapse. This Bos taurus (Bovine) protein is Neurotrophic factor BDNF precursor form (BDNF).